A 321-amino-acid polypeptide reads, in one-letter code: Glucokinase (321 aa).

Residue Gly-8–Thr-13 coordinates ATP.

Belongs to the bacterial glucokinase family.

It localises to the cytoplasm. It carries out the reaction D-glucose + ATP = D-glucose 6-phosphate + ADP + H(+). The sequence is that of Glucokinase from Salmonella choleraesuis (strain SC-B67).